The primary structure comprises 906 residues: Ankyrin repeat and MYND domain-containing protein 1 (906 aa).

MORN repeat units follow at residues 16–38 (YHGQFYRDHFHGLGTYTWPDGSS), 39–59 (FTGTFYLSQREGYGTMHTKTM), and 61–83 (FQGLYKEDQRFGPGIETYPDGSQ). Residues 282–311 (KGYTVLAAAAMHSHLDIVNLLLDFGADVNK) form an ANK 1 repeat. The segment covering 391–400 (SMQTPESSNM) has biased composition (polar residues). The interval 391-411 (SMQTPESSNMLHKEEVSPVKT) is disordered. ANK repeat units follow at residues 479-508 (VRKMAQSMVERRNRWMTITLLLRRGADPNL), 511-540 (VPMQALFLAVKAGDVEGVRLLLMSGAQTDI), 547-579 (QSLTPLHIAVSLPGEEGVKITELLLHVITNVDA), 623-657 (GGRTALHVACEREDNKKCARDIVRLLLSHRANPNV), 660-689 (SGHSPLSLAIASGNDLVVKELLSQGADPNL), and 701-732 (VVCDLVYEQQRSVENKIALIDRLISYGADVLN). Cys-845, Cys-848, Cys-859, Cys-862, Cys-868, Cys-872, His-881, and Cys-885 together coordinate Zn(2+). An MYND-type zinc finger spans residues 845 to 885 (CYQCGRSIGVRLSPCPRCYGILTCSKYCKTKAWIEFHKKDC).

The polypeptide is Ankyrin repeat and MYND domain-containing protein 1 (Ankmy1) (Mus musculus (Mouse)).